A 71-amino-acid polypeptide reads, in one-letter code: Small ribosomal subunit protein bS21 (71 aa).

This sequence belongs to the bacterial ribosomal protein bS21 family.

This Buchnera aphidicola subsp. Baizongia pistaciae (strain Bp) protein is Small ribosomal subunit protein bS21.